We begin with the raw amino-acid sequence, 749 residues long: Putative Xaa-Pro aminopeptidase FRA1 (749 aa).

The tract at residues 1–33 is disordered; sequence MTSKPSTSDGRAHSISHVPGTHMRGTSASHSPR. Residues Ser-69, Ser-92, and Ser-95 each carry the phosphoserine modification. Mn(2+)-binding residues include Asp-551, Asp-562, Glu-660, and Glu-674.

Belongs to the peptidase M24B family. As to quaternary structure, homodimer. Interacts with FRA2. Mn(2+) serves as cofactor.

The protein resides in the cytoplasm. It catalyses the reaction Release of any N-terminal amino acid, including proline, that is linked to proline, even from a dipeptide or tripeptide.. Its function is as follows. Involved in the regulation of the iron regulon in responss to decreased mitochondrial iron-sulfur cluster synthesis. The sequence is that of Putative Xaa-Pro aminopeptidase FRA1 (FRA1) from Saccharomyces cerevisiae (strain ATCC 204508 / S288c) (Baker's yeast).